Here is a 409-residue protein sequence, read N- to C-terminus: MNKPKKVAILTAGGLAPCLSSAIGSLIERYTEIDPSIEIICYRSGYKGLLLGDSYAVTPKIRENAALLHKFGGSPIGNSRVKLTNVKDCIKRGLVQEGQDPQKVAADQLVKDGVDVLHTIGGDDTNTAAADLAAFLAKNDYGLTVIGLPKTIDNDVFPIKQSLGAWTAAEQGAQYFQNVVAEYNANPRMLIVHEVMGRNCGWLTAATAMEYRKLLDRSEWLPEIGLDRAAYEVHGVFVPEMEIDLAAEAKRLREVMDKVDCVNIFVSEGAGVDAIVAEMQAKGQEVPRDAFGHIKLDAVNPGKWFGEQFAEMIGAEKTLIQKSGYFARASASNVDDIRLIKSCADLAVECAFRRESGVIGHDEDNGNVLRAIEFPRIKGGKPFDIDTPWFVQMLAGIGQSKGARVEVSH.

Residue glycine 14 participates in diphosphate binding. Aspartate 123 serves as a coordination point for Mg(2+). Residues 151–153, 196–198, glutamate 268, and 325–328 contribute to the substrate site; these read TID, MGR, and YFAR. The Proton acceptor role is filled by aspartate 153.

Belongs to the phosphofructokinase type A (PFKA) family. PPi-dependent PFK group II subfamily. Clade 'P' sub-subfamily. In terms of assembly, homotetramer. Mg(2+) is required as a cofactor.

It is found in the cytoplasm. The catalysed reaction is beta-D-fructose 6-phosphate + diphosphate = beta-D-fructose 1,6-bisphosphate + phosphate + H(+). It functions in the pathway carbohydrate degradation; glycolysis; D-glyceraldehyde 3-phosphate and glycerone phosphate from D-glucose: step 3/4. With respect to regulation, non-allosteric. Catalyzes the phosphorylation of D-fructose 6-phosphate, the first committing step of glycolysis. Uses inorganic phosphate (PPi) as phosphoryl donor instead of ATP like common ATP-dependent phosphofructokinases (ATP-PFKs), which renders the reaction reversible, and can thus function both in glycolysis and gluconeogenesis. Consistently, PPi-PFK can replace the enzymes of both the forward (ATP-PFK) and reverse (fructose-bisphosphatase (FBPase)) reactions. In Methylotuvimicrobium alcaliphilum (strain DSM 19304 / NCIMB 14124 / VKM B-2133 / 20Z) (Methylomicrobium alcaliphilum), this protein is Pyrophosphate--fructose 6-phosphate 1-phosphotransferase.